The primary structure comprises 171 residues: UPF0398 protein MGAS10270_Spy1470 (171 aa).

The protein belongs to the UPF0398 family.

This chain is UPF0398 protein MGAS10270_Spy1470, found in Streptococcus pyogenes serotype M2 (strain MGAS10270).